Consider the following 478-residue polypeptide: Proline--tRNA ligase (478 aa).

The protein belongs to the class-II aminoacyl-tRNA synthetase family. ProS type 3 subfamily. As to quaternary structure, homodimer.

It localises to the cytoplasm. It carries out the reaction tRNA(Pro) + L-proline + ATP = L-prolyl-tRNA(Pro) + AMP + diphosphate. Catalyzes the attachment of proline to tRNA(Pro) in a two-step reaction: proline is first activated by ATP to form Pro-AMP and then transferred to the acceptor end of tRNA(Pro). This chain is Proline--tRNA ligase, found in Oceanobacillus iheyensis (strain DSM 14371 / CIP 107618 / JCM 11309 / KCTC 3954 / HTE831).